The sequence spans 83 residues: Putative snRNP Sm-like protein (83 aa).

The region spanning 9–81 is the Sm domain; that stretch reads KPMDVLKNAL…VIFVSPSKGD (73 aa).

This sequence belongs to the snRNP Sm proteins family.

The polypeptide is Putative snRNP Sm-like protein (Thermoplasma volcanium (strain ATCC 51530 / DSM 4299 / JCM 9571 / NBRC 15438 / GSS1)).